Here is a 1263-residue protein sequence, read N- to C-terminus: DNA-directed RNA polymerase subunit beta (1263 aa).

Belongs to the RNA polymerase beta chain family. In terms of assembly, the RNAP catalytic core consists of 2 alpha, 1 beta, 1 beta' and 1 omega subunit. When a sigma factor is associated with the core the holoenzyme is formed, which can initiate transcription.

The catalysed reaction is RNA(n) + a ribonucleoside 5'-triphosphate = RNA(n+1) + diphosphate. In terms of biological role, DNA-dependent RNA polymerase catalyzes the transcription of DNA into RNA using the four ribonucleoside triphosphates as substrates. This Thermotoga petrophila (strain ATCC BAA-488 / DSM 13995 / JCM 10881 / RKU-1) protein is DNA-directed RNA polymerase subunit beta.